A 68-amino-acid chain; its full sequence is Small ribosomal subunit protein bS21 (68 aa).

Belongs to the bacterial ribosomal protein bS21 family.

This chain is Small ribosomal subunit protein bS21, found in Cereibacter sphaeroides (strain ATCC 17029 / ATH 2.4.9) (Rhodobacter sphaeroides).